We begin with the raw amino-acid sequence, 89 residues long: Cell division topological specificity factor (89 aa).

The protein belongs to the MinE family.

Prevents the cell division inhibition by proteins MinC and MinD at internal division sites while permitting inhibition at polar sites. This ensures cell division at the proper site by restricting the formation of a division septum at the midpoint of the long axis of the cell. The protein is Cell division topological specificity factor of Proteus mirabilis (strain HI4320).